The following is a 318-amino-acid chain: DNA-directed RNA polymerase subunit alpha 2 (318 aa).

The segment at 1–227 is alpha N-terminal domain (alpha-NTD); the sequence is MALENLLHPT…NQLRNILDIE (227 aa). The alpha C-terminal domain (alpha-CTD) stretch occupies residues 242 to 318; that stretch reads INPILLKHVE…TLIENWPQDL (77 aa).

It belongs to the RNA polymerase alpha chain family. As to quaternary structure, homodimer. The RNAP catalytic core consists of 2 alpha, 1 beta, 1 beta' and 1 omega subunit. When a sigma factor is associated with the core the holoenzyme is formed, which can initiate transcription.

The enzyme catalyses RNA(n) + a ribonucleoside 5'-triphosphate = RNA(n+1) + diphosphate. Its function is as follows. DNA-dependent RNA polymerase catalyzes the transcription of DNA into RNA using the four ribonucleoside triphosphates as substrates. In Francisella tularensis subsp. tularensis (strain FSC 198), this protein is DNA-directed RNA polymerase subunit alpha 2.